We begin with the raw amino-acid sequence, 264 residues long: MDLLYRVKTLWAALRGNHYTWPAIDITLPGNRHSHLIGSIHMGSHDMAPLPTRLLKKLKNADALIVEADVSTSDTPFANLPACEALEERISEEQLQNLQHISQEMGISPSLFSTQPLWQIAMVLQATQAQKLGLRAEYGIDYQLLQAAKQQHKPVIELEGAENQIAMLLQLPDKGLALLDDTLTHWHTNARLLQQMMSWWLNAPPQNNDITLPNTFSQSLYDVLMHQRNLAWRDKLRAMPPGRYVVAVGALHLYGEGNLPQMLR.

This is an uncharacterized protein from Shigella flexneri.